A 306-amino-acid chain; its full sequence is MRIEDIPHIPVLLNETIGLYNDMPENGYFIDCTLGFGGHSEAILEKYPNIKLIGIDQDAEAMHFAKNRLARFGDRVQFINKRASSALEELPEDLPVSGILADIGVSSYQLDNKERGFTFESEELDMRMDKTQDFSAKDVVNFYSKEDLERIIKNYGECRRFKKVVSAIISKRPIKSNRELADILGHIGLRDKKDLAKIFQAIRIEVNNELNELEKILKNAKKLAKNGTILGIITFHSLEDRIVKNTFKEWSKKCICPPEAIRCECGGNNQLGKILTKKPLVASKEEIKMNPRSRSAKLRGFQFIRG.

S-adenosyl-L-methionine contacts are provided by residues 37–39 (GGH), Asp56, Asp102, and Gln109.

Belongs to the methyltransferase superfamily. RsmH family.

It localises to the cytoplasm. The catalysed reaction is cytidine(1402) in 16S rRNA + S-adenosyl-L-methionine = N(4)-methylcytidine(1402) in 16S rRNA + S-adenosyl-L-homocysteine + H(+). Functionally, specifically methylates the N4 position of cytidine in position 1402 (C1402) of 16S rRNA. The chain is Ribosomal RNA small subunit methyltransferase H from Nautilia profundicola (strain ATCC BAA-1463 / DSM 18972 / AmH).